The following is a 768-amino-acid chain: DNA replication licensing factor MCM3 homolog 2 (768 aa).

In terms of domain architecture, MCM spans 290 to 497 (TFDLLGNSLA…IDRQISEHVA (208 aa)). 340–347 (GDPSVAKS) is a binding site for ATP. An Arginine finger motif is present at residues 472 to 475 (SRFD). The span at 661-670 (EMKQQADHDA) shows a compositional bias: basic and acidic residues. The tract at residues 661–689 (EMKQQADHDAGATGGTVDGHGSSGNDPMD) is disordered. Residues 672 to 682 (ATGGTVDGHGS) show a composition bias toward gly residues.

It belongs to the MCM family.

Its subcellular location is the nucleus. It carries out the reaction ATP + H2O = ADP + phosphate + H(+). In terms of biological role, acts as a factor that allows the DNA to undergo a single round of replication per cell cycle. Required for DNA replication and cell proliferation. May act as a component of the MCM complex which is the putative replicative helicase of the replication licensing system in eukaryotic cells. This chain is DNA replication licensing factor MCM3 homolog 2 (ROA2), found in Zea mays (Maize).